The following is a 146-amino-acid chain: Ferredoxin-type protein FwdE (146 aa).

4Fe-4S ferredoxin-type domains follow at residues 90–115 (IKLFWDENSCIACGSCLGCAALTLDN) and 116–145 (FTVGIDEDTCHLCASCIFRCPTNSLKFIKE). [4Fe-4S] cluster-binding residues include cysteine 125, cysteine 128, cysteine 131, and cysteine 135.

Requires [4Fe-4S] cluster as cofactor.

The protein is Ferredoxin-type protein FwdE (fwdE) of Methanocaldococcus jannaschii (strain ATCC 43067 / DSM 2661 / JAL-1 / JCM 10045 / NBRC 100440) (Methanococcus jannaschii).